A 291-amino-acid polypeptide reads, in one-letter code: Filament protein FIN1 (291 aa).

Serine 54 carries the phosphoserine modification. A Phosphothreonine modification is found at threonine 68. Phosphoserine is present on residues serine 74 and serine 88. Residues 254–284 (VELKEIKDLLLQMLRRQREIESRLSNIELQL) adopt a coiled-coil conformation.

As to quaternary structure, homooligomer; in vitro, FIN1 self-assembles into 10 nm diameter filaments. Interacts with the 14-3-3 proteins BMH1 and BMH2, and the protein phosphatase 1 complex catalytic subunit GLC7. Post-translationally, phosphorylated by CDC28. Phosphorylation is required for BMH1 and BMH2 interaction. Dephosphorylation by GLC7 depends on the presence of BMH1 and BMH2.

It is found in the nucleus. The protein resides in the cytoplasm. The protein localises to the cytoskeleton. Its subcellular location is the spindle pole. Forms cell-cycle specific filaments between the spindle pole bodies of dividing yeast cells. This Saccharomyces cerevisiae (strain ATCC 204508 / S288c) (Baker's yeast) protein is Filament protein FIN1 (FIN1).